The chain runs to 443 residues: MDEEIDTRKINNSFLRDHNYATEADIISTVEFNPTGELLATGDKGGRVVVFQREQESKSQPHRRGEYNVYSTFQSHEPEFDYLKSLEIEEKINKIRWLPRQNAAYFPLSTNDKTVKLWKISERDKRPEGYNLKDEEGRIRDPTTITTLRVPVLRPMDLMVEATPRRIFSNAHTYHINSISVNSDYETYMSTDDLRINLWNLEITNRSFNIVDIKPANMEELTEVITAAEFHPNQCNTFVYSSSKGSIRLCDMRTSALCDNHSKLFEEPEDPSNRSFFSEIISSISDVKFSHSGRYLMTRDYLTVKVWDINMESKPLETYQVHDYLRSKLCSLYENDCIFDKFECVWNGTDSVLMTGSYNNFFRMFDRNTKRDVTLEASRENSKPRAILKPRKVCIGGKRRKDEISVDSLDFSKKILHTAWHPNENIIAVAATNNLYIFQDKVN.

WD repeat units follow at residues 22–61, 87–128, 171–209, 220–260, 279–317, 334–375, and 410–443; these read TEAD…KSQP, EIEE…KRPE, AHTY…RSFN, ELTE…LCDN, EIIS…KPLE, ENDC…DVTL, and DFSK…DKVN.

Belongs to the phosphatase 2A regulatory subunit B family. As to quaternary structure, PP2A consists of a common heterodimeric core enzyme, composed of a 36 kDa catalytic subunit (subunit C) and a 65 kDa constant regulatory subunit (PR65 or subunit A), that associates with a variety of regulatory subunits.

It localises to the cytoplasm. The protein localises to the cytoskeleton. The protein resides in the membrane. Functionally, the B regulatory subunit might modulate substrate selectivity and catalytic activity, and might also direct the localization of the catalytic enzyme to a particular subcellular compartment. This Carassius auratus (Goldfish) protein is Serine/threonine-protein phosphatase 2A 55 kDa regulatory subunit B beta isoform (ppp2r2b).